Consider the following 193-residue polypeptide: Imidazoleglycerol-phosphate dehydratase (193 aa).

Belongs to the imidazoleglycerol-phosphate dehydratase family.

The protein resides in the cytoplasm. The catalysed reaction is D-erythro-1-(imidazol-4-yl)glycerol 3-phosphate = 3-(imidazol-4-yl)-2-oxopropyl phosphate + H2O. It functions in the pathway amino-acid biosynthesis; L-histidine biosynthesis; L-histidine from 5-phospho-alpha-D-ribose 1-diphosphate: step 6/9. The polypeptide is Imidazoleglycerol-phosphate dehydratase (hisB) (Saccharolobus solfataricus (strain ATCC 35092 / DSM 1617 / JCM 11322 / P2) (Sulfolobus solfataricus)).